The following is a 375-amino-acid chain: Ribonuclease D (375 aa).

One can recognise a 3'-5' exonuclease domain in the interval 3 to 169; the sequence is YQMITTDDAL…LPITAKLMVE (167 aa). In terms of domain architecture, HRDC spans 210-289; the sequence is RTRQLACLQL…EKAQTLPEDA (80 aa).

Belongs to the RNase D family. The cofactor is a divalent metal cation.

The protein localises to the cytoplasm. It carries out the reaction Exonucleolytic cleavage that removes extra residues from the 3'-terminus of tRNA to produce 5'-mononucleotides.. Functionally, exonuclease involved in the 3' processing of various precursor tRNAs. Initiates hydrolysis at the 3'-terminus of an RNA molecule and releases 5'-mononucleotides. This Escherichia coli (strain K12) protein is Ribonuclease D.